A 206-amino-acid chain; its full sequence is N-(5'-phosphoribosyl)anthranilate isomerase (206 aa).

Belongs to the TrpF family.

It carries out the reaction N-(5-phospho-beta-D-ribosyl)anthranilate = 1-(2-carboxyphenylamino)-1-deoxy-D-ribulose 5-phosphate. The protein operates within amino-acid biosynthesis; L-tryptophan biosynthesis; L-tryptophan from chorismate: step 3/5. The protein is N-(5'-phosphoribosyl)anthranilate isomerase of Pseudomonas putida (strain W619).